A 479-amino-acid chain; its full sequence is Chromosomal replication initiator protein DnaA (479 aa).

The segment at 1 to 94 is domain I, interacts with DnaA modulators; it reads MKGGTMVENA…QTLWRTERED (94 aa). The domain II stretch occupies residues 94-142; it reads DIKGVELQVKRGLPEVSMGDAEDGEDGSGEGHELATQAAAPESRSDLAV. A disordered region spans residues 106 to 137; the sequence is LPEVSMGDAEDGEDGSGEGHELATQAAAPESR. The tract at residues 143-359 is domain III, AAA+ region; sequence PLDPRFTFDT…GALNRLIAHA (217 aa). ATP contacts are provided by G188, G190, K191, and T192. The domain IV, binds dsDNA stretch occupies residues 360–479; it reads DLVGRPVTLD…VELLRRMLEG (120 aa).

This sequence belongs to the DnaA family. Oligomerizes as a right-handed, spiral filament on DNA at oriC.

It is found in the cytoplasm. Functionally, plays an essential role in the initiation and regulation of chromosomal replication. ATP-DnaA binds to the origin of replication (oriC) to initiate formation of the DNA replication initiation complex once per cell cycle. Binds the DnaA box (a 9 base pair repeat at the origin) and separates the double-stranded (ds)DNA. Forms a right-handed helical filament on oriC DNA; dsDNA binds to the exterior of the filament while single-stranded (ss)DNA is stabiized in the filament's interior. The ATP-DnaA-oriC complex binds and stabilizes one strand of the AT-rich DNA unwinding element (DUE), permitting loading of DNA polymerase. After initiation quickly degrades to an ADP-DnaA complex that is not apt for DNA replication. Binds acidic phospholipids. This Gluconobacter oxydans (strain 621H) (Gluconobacter suboxydans) protein is Chromosomal replication initiator protein DnaA.